Here is a 314-residue protein sequence, read N- to C-terminus: tRNA(Ile)-lysidine synthase (314 aa).

Residue 37 to 42 (SGGPDS) coordinates ATP.

Belongs to the tRNA(Ile)-lysidine synthase family.

It localises to the cytoplasm. The enzyme catalyses cytidine(34) in tRNA(Ile2) + L-lysine + ATP = lysidine(34) in tRNA(Ile2) + AMP + diphosphate + H(+). In terms of biological role, ligates lysine onto the cytidine present at position 34 of the AUA codon-specific tRNA(Ile) that contains the anticodon CAU, in an ATP-dependent manner. Cytidine is converted to lysidine, thus changing the amino acid specificity of the tRNA from methionine to isoleucine. In Corynebacterium glutamicum (strain ATCC 13032 / DSM 20300 / JCM 1318 / BCRC 11384 / CCUG 27702 / LMG 3730 / NBRC 12168 / NCIMB 10025 / NRRL B-2784 / 534), this protein is tRNA(Ile)-lysidine synthase.